The primary structure comprises 293 residues: ATP synthase subunit a (293 aa).

A run of 6 helical transmembrane segments spans residues 40-60 (DSLF…WLAA), 97-117 (LFVA…NALD), 151-171 (DLNV…YYGI), 188-208 (FHAH…LNLI), 225-245 (MFAG…WTGF), and 264-284 (AIFH…LTLV).

The protein belongs to the ATPase A chain family. As to quaternary structure, F-type ATPases have 2 components, CF(1) - the catalytic core - and CF(0) - the membrane proton channel. CF(1) has five subunits: alpha(3), beta(3), gamma(1), delta(1), epsilon(1). CF(0) has three main subunits: a(1), b(2) and c(9-12). The alpha and beta chains form an alternating ring which encloses part of the gamma chain. CF(1) is attached to CF(0) by a central stalk formed by the gamma and epsilon chains, while a peripheral stalk is formed by the delta and b chains.

Its subcellular location is the cell inner membrane. Functionally, key component of the proton channel; it plays a direct role in the translocation of protons across the membrane. In Bordetella bronchiseptica (strain ATCC BAA-588 / NCTC 13252 / RB50) (Alcaligenes bronchisepticus), this protein is ATP synthase subunit a.